Reading from the N-terminus, the 90-residue chain is DNA-binding protein HRm (90 aa).

The protein belongs to the bacterial histone-like protein family.

In terms of biological role, histone-like DNA-binding protein which is capable of wrapping DNA to stabilize it, and thus to prevent its denaturation under extreme environmental conditions. In Rhizobium meliloti (strain 1021) (Ensifer meliloti), this protein is DNA-binding protein HRm (hupB).